Here is a 95-residue protein sequence, read N- to C-terminus: Aspartyl/glutamyl-tRNA(Asn/Gln) amidotransferase subunit C (95 aa).

Belongs to the GatC family. As to quaternary structure, heterotrimer of A, B and C subunits.

The catalysed reaction is L-glutamyl-tRNA(Gln) + L-glutamine + ATP + H2O = L-glutaminyl-tRNA(Gln) + L-glutamate + ADP + phosphate + H(+). It carries out the reaction L-aspartyl-tRNA(Asn) + L-glutamine + ATP + H2O = L-asparaginyl-tRNA(Asn) + L-glutamate + ADP + phosphate + 2 H(+). Functionally, allows the formation of correctly charged Asn-tRNA(Asn) or Gln-tRNA(Gln) through the transamidation of misacylated Asp-tRNA(Asn) or Glu-tRNA(Gln) in organisms which lack either or both of asparaginyl-tRNA or glutaminyl-tRNA synthetases. The reaction takes place in the presence of glutamine and ATP through an activated phospho-Asp-tRNA(Asn) or phospho-Glu-tRNA(Gln). The polypeptide is Aspartyl/glutamyl-tRNA(Asn/Gln) amidotransferase subunit C (Campylobacter curvus (strain 525.92)).